Consider the following 196-residue polypeptide: DnaA initiator-associating protein DiaA (196 aa).

Positions 34-196 (LVHSLLNGNK…DNTLFPHQDD (163 aa)) constitute an SIS domain.

The protein belongs to the SIS family. DiaA subfamily. In terms of assembly, homotetramer; dimer of dimers.

In terms of biological role, required for the timely initiation of chromosomal replication via direct interactions with the DnaA initiator protein. In Citrobacter koseri (strain ATCC BAA-895 / CDC 4225-83 / SGSC4696), this protein is DnaA initiator-associating protein DiaA.